Reading from the N-terminus, the 209-residue chain is Large ribosomal subunit protein uL4 (209 aa).

It belongs to the universal ribosomal protein uL4 family. As to quaternary structure, part of the 50S ribosomal subunit.

One of the primary rRNA binding proteins, this protein initially binds near the 5'-end of the 23S rRNA. It is important during the early stages of 50S assembly. It makes multiple contacts with different domains of the 23S rRNA in the assembled 50S subunit and ribosome. In terms of biological role, forms part of the polypeptide exit tunnel. This is Large ribosomal subunit protein uL4 from Borrelia duttonii (strain Ly).